The sequence spans 407 residues: Phosphopentomutase (407 aa).

6 residues coordinate Mn(2+): aspartate 11, aspartate 305, histidine 310, aspartate 346, histidine 347, and histidine 358.

The protein belongs to the phosphopentomutase family. It depends on Mn(2+) as a cofactor.

Its subcellular location is the cytoplasm. It carries out the reaction 2-deoxy-alpha-D-ribose 1-phosphate = 2-deoxy-D-ribose 5-phosphate. It catalyses the reaction alpha-D-ribose 1-phosphate = D-ribose 5-phosphate. It functions in the pathway carbohydrate degradation; 2-deoxy-D-ribose 1-phosphate degradation; D-glyceraldehyde 3-phosphate and acetaldehyde from 2-deoxy-alpha-D-ribose 1-phosphate: step 1/2. Functionally, isomerase that catalyzes the conversion of deoxy-ribose 1-phosphate (dRib-1-P) and ribose 1-phosphate (Rib-1-P) to deoxy-ribose 5-phosphate (dRib-5-P) and ribose 5-phosphate (Rib-5-P), respectively. The chain is Phosphopentomutase from Legionella pneumophila (strain Paris).